The following is a 92-amino-acid chain: Small ribosomal subunit protein uS19 (92 aa).

Belongs to the universal ribosomal protein uS19 family.

Its function is as follows. Protein S19 forms a complex with S13 that binds strongly to the 16S ribosomal RNA. The polypeptide is Small ribosomal subunit protein uS19 (Rhodopseudomonas palustris (strain HaA2)).